The sequence spans 116 residues: Large ribosomal subunit protein bL19 (116 aa).

It belongs to the bacterial ribosomal protein bL19 family.

Its function is as follows. This protein is located at the 30S-50S ribosomal subunit interface and may play a role in the structure and function of the aminoacyl-tRNA binding site. This chain is Large ribosomal subunit protein bL19, found in Ectopseudomonas mendocina (strain ymp) (Pseudomonas mendocina).